Consider the following 239-residue polypeptide: MSEAAELPPVPEQARDVFGDRYADAVRYAELLAEAGVKRGLIGPREVPRLWERHLLNCAVLSEVVPEGVTVCDVGSGAGLPGIPLALVREDLKITLLEPLLRRTNFLTEVVELLGLDHVTVVRGRAEEVMGKLPPVHVVTARAVAPLDRLATWGIPLLRPYGEMLALKGDTAEEELKAATAALSKLGAEQTSILHVGEGVVSPLSTVVRVEVGESPGGVRFAAKRAKAARTGRTRRRRG.

Residues G75, L80, 126 to 127 (AE), and R142 contribute to the S-adenosyl-L-methionine site.

The protein belongs to the methyltransferase superfamily. RNA methyltransferase RsmG family.

The protein resides in the cytoplasm. Specifically methylates the N7 position of guanine in position 518 of 16S rRNA. This chain is Ribosomal RNA small subunit methyltransferase G, found in Streptomyces coelicolor (strain ATCC BAA-471 / A3(2) / M145).